A 356-amino-acid chain; its full sequence is S-adenosylmethionine:tRNA ribosyltransferase-isomerase (356 aa).

It belongs to the QueA family. In terms of assembly, monomer.

It is found in the cytoplasm. The catalysed reaction is 7-aminomethyl-7-carbaguanosine(34) in tRNA + S-adenosyl-L-methionine = epoxyqueuosine(34) in tRNA + adenine + L-methionine + 2 H(+). It participates in tRNA modification; tRNA-queuosine biosynthesis. Functionally, transfers and isomerizes the ribose moiety from AdoMet to the 7-aminomethyl group of 7-deazaguanine (preQ1-tRNA) to give epoxyqueuosine (oQ-tRNA). The sequence is that of S-adenosylmethionine:tRNA ribosyltransferase-isomerase from Escherichia coli (strain 55989 / EAEC).